Here is a 225-residue protein sequence, read N- to C-terminus: Cbp/p300-interacting transactivator 2 (225 aa).

Belongs to the CITED family.

The protein localises to the nucleus. In terms of biological role, transcriptional coactivator or corepressor of the p300/CBP-mediated transcription complex. May be involved in sex determination, early gonad development, left-right patterning during embryogenesis and differentiation of the adrenal cortex. The polypeptide is Cbp/p300-interacting transactivator 2 (cited2) (Xenopus laevis (African clawed frog)).